Here is an 800-residue protein sequence, read N- to C-terminus: Protein SPT2 homolog (800 aa).

The interval 1–687 (MDFHSVLRMA…PGHRPNMQPP (687 aa)) is important for interaction with DNA. Positions 53–82 (QEIQNKEVEAKRKKEGLLAKRKELKHDRKA) form a coiled coil. Disordered stretches follow at residues 70 to 173 (LAKR…PALN), 197 to 646 (KEER…MAKP), and 661 to 698 (VPKSINGHMNGMRSAVPPGHRPNMQPPGRPLPPITSSY). The span at 124-137 (TEEDEEYMTEEELY) shows a compositional bias: acidic residues. Low complexity predominate over residues 155 to 164 (PQKVAKAAPG). Residues 196–224 (KKEERLRTAEELKELEFLERKAQKADRKD) adopt a coiled-coil conformation. Basic and acidic residues-rich tracts occupy residues 197-226 (KEERLRTAEELKELEFLERKAQKADRKDPM) and 249-259 (HSVEKRSHENS). Residues 260–272 (KSSSTEQNGTFRK) show a composition bias toward polar residues. Over residues 273-295 (SSSDNRSREEKSGSVFHTKDSKF) the composition is skewed to basic and acidic residues. Low complexity-rich tracts occupy residues 328-360 (SGSTSLRPSSGGSSSVSGRPSGSSEKPGSSSGK), 367-377 (SSSARSSSGSG), 390-424 (GASGSGSARSVGESGSRSGKPTGASGSGLARSVGA), 443-501 (GVSG…SVSG), and 514-581 (GAPG…ASSS). The segment covering 608 to 626 (NSVRHNTTSISVSARSSLG) has biased composition (polar residues). A compositionally biased stretch (pro residues) spans 684–693 (MQPPGRPLPP). Residues 688 to 800 (GRPLPPITSS…LKSAKKMKSR (113 aa)) form an important for interaction with histones region. A coiled-coil region spans residues 756 to 800 (REQQKEEARSLRLGIQEDLEELRREEEELKQKAKQLKSAKKMKSR).

It belongs to the SPT2 family. As to quaternary structure, interacts with histones. Interacts with a heterotetrameric complex formed by histone H3 and H4, especially when the histone tetramer is not bound to DNA.

The protein localises to the nucleus. It is found in the nucleolus. In terms of biological role, histone chaperone that stabilizes pre-existing histone tetramers and regulates replication-independent histone exchange on chromatin. Required for normal chromatin refolding in the coding region of transcribed genes, and for the suppression of spurious transcription. Binds DNA and histones and promotes nucleosome assembly (in vitro). Facilitates formation of tetrameric histone complexes containing histone H3 and H4. Modulates RNA polymerase 1-mediated transcription. Binds DNA, with a preference for branched DNA species, such as Y-form DNA and Holliday junction DNA. In Xenopus laevis (African clawed frog), this protein is Protein SPT2 homolog (spty2d1).